The chain runs to 34 residues: Corticostatin-6 (34 aa).

3 disulfides stabilise this stretch: cysteine 3–cysteine 31, cysteine 5–cysteine 20, and cysteine 10–cysteine 30.

Belongs to the alpha-defensin family. In terms of tissue distribution, lung, spleen, small intestine, pituitary gland, adrenal medulla and plasma.

It localises to the secreted. Its function is as follows. Microbicidal activity and inhibits corticotropin (ACTH) stimulated corticosterone production. This is Corticostatin-6 from Oryctolagus cuniculus (Rabbit).